The sequence spans 174 residues: 3-hydroxyanthranilate 3,4-dioxygenase (174 aa).

An O2-binding site is contributed by Arg47. Residues His51, Glu57, and His95 each coordinate Fe cation. Substrate is bound at residue Glu57. Positions 99 and 110 each coordinate substrate. Fe cation is bound by residues Cys125, Cys128, Cys162, and Cys165.

It belongs to the 3-HAO family. In terms of assembly, homodimer. Requires Fe(2+) as cofactor.

It carries out the reaction 3-hydroxyanthranilate + O2 = (2Z,4Z)-2-amino-3-carboxymuconate 6-semialdehyde. Its pathway is cofactor biosynthesis; NAD(+) biosynthesis; quinolinate from L-kynurenine: step 3/3. Functionally, catalyzes the oxidative ring opening of 3-hydroxyanthranilate to 2-amino-3-carboxymuconate semialdehyde, which spontaneously cyclizes to quinolinate. The polypeptide is 3-hydroxyanthranilate 3,4-dioxygenase (Burkholderia lata (strain ATCC 17760 / DSM 23089 / LMG 22485 / NCIMB 9086 / R18194 / 383)).